Here is a 226-residue protein sequence, read N- to C-terminus: 6-deoxy-6-sulfo-D-fructose transaldolase (226 aa).

K89 serves as the catalytic Schiff-base intermediate with substrate.

It belongs to the transaldolase family.

The enzyme catalyses 6-deoxy-6-sulfo-D-fructose + D-glyceraldehyde 3-phosphate = D-fructose 6-phosphate + (2S)-3-sulfolactaldehyde. It catalyses the reaction 6-deoxy-6-sulfo-D-fructose + D-erythrose 4-phosphate = (2S)-3-sulfolactaldehyde + D-sedoheptulose 7-phosphate. Its function is as follows. Part of the sulfo-TAL (or sulfo-SFT) pathway, a D-sulfoquinovose degradation pathway that produces sulfolactate (SL). Catalyzes the conversion of 6-deoxy-6-sulfo-D-fructose (SF) and glyceraldehyde 3-phosphate (GAP) into fructose-6-phosphate (F6P) and 3-sulfolactaldehyde (SLA). Can also catalyze the SF-cleavage with erythrose 4-phosphate (E4P) as acceptor, forming 3-sulfolactaldehyde (SLA) and sedoheptulose 7-phosphate (S7P). The protein is 6-deoxy-6-sulfo-D-fructose transaldolase of Priestia aryabhattai (Bacillus aryabhattai).